The primary structure comprises 299 residues: tRNA dimethylallyltransferase (299 aa).

G11 to T18 lines the ATP pocket. Residue T13–T18 participates in substrate binding. Positions D36–Q39 are interaction with substrate tRNA.

Belongs to the IPP transferase family. As to quaternary structure, monomer. Mg(2+) is required as a cofactor.

It carries out the reaction adenosine(37) in tRNA + dimethylallyl diphosphate = N(6)-dimethylallyladenosine(37) in tRNA + diphosphate. Catalyzes the transfer of a dimethylallyl group onto the adenine at position 37 in tRNAs that read codons beginning with uridine, leading to the formation of N6-(dimethylallyl)adenosine (i(6)A). The protein is tRNA dimethylallyltransferase of Streptococcus pyogenes serotype M18 (strain MGAS8232).